Here is a 494-residue protein sequence, read N- to C-terminus: Guanosine-5'-triphosphate,3'-diphosphate pyrophosphatase (494 aa).

The protein belongs to the GppA/Ppx family. GppA subfamily.

The enzyme catalyses guanosine 3'-diphosphate 5'-triphosphate + H2O = guanosine 3',5'-bis(diphosphate) + phosphate + H(+). Its pathway is purine metabolism; ppGpp biosynthesis; ppGpp from GTP: step 2/2. Catalyzes the conversion of pppGpp to ppGpp. Guanosine pentaphosphate (pppGpp) is a cytoplasmic signaling molecule which together with ppGpp controls the 'stringent response', an adaptive process that allows bacteria to respond to amino acid starvation, resulting in the coordinated regulation of numerous cellular activities. In Escherichia coli O127:H6 (strain E2348/69 / EPEC), this protein is Guanosine-5'-triphosphate,3'-diphosphate pyrophosphatase.